We begin with the raw amino-acid sequence, 554 residues long: MYAKKFTGSDPQTVRTAAEIVALQRMKNRNDSDTDFSDDDEETSGGCPKMTPQEEQRMFEREQQIAFSGRCTIGDPESCHQLRTDINHRCGPRPSTSSNATWNILNRDVQRRNGPVMTSASRAHLLNTHLPNKKRRVDQLRTKNFCAQYIQNGRKMVVSSQGERENSFLSTKSGKIEISLPILSMQRTPCGPLQLVDLDTAVNQQGDLISYCTWKDAVYIGRMEQEDNQNITWFPIDWHGEHAVQNQCAVFCVRFSDDSEQIVCGTSEYSIHVFDVEQRRRIRTIVNAHEDDVNSVCFADYGSNLIYSAGDDGLVKVWDKRAWSDGDVIPVGVFAGHRDGVTYVDSRQDERYLLSNSKDQTIKVWDLRKFSCQGGVEATRACVQSQHWDYRWQPAPPGLCQPVQGDTSVMTLRGHSVLHTLVRAKFSPENTGRRFIYTGCARGEIVVYDIVTGTVSRRLKGHQAVVRECDWHPQENEIVSTSWDGVTTVWTWDERAEGVIAPYDHPNIHQFGDEDSCDELYQPIKKPQRKLRKPISARNAKCPTTSSEPDDFQI.

The disordered stretch occupies residues 24-52 (QRMKNRNDSDTDFSDDDEETSGGCPKMTP). Positions 33–43 (DTDFSDDDEET) are enriched in acidic residues. WD repeat units follow at residues 245 to 284 (QNQC…RIRT), 288 to 328 (AHED…DGDV), 336 to 375 (GHRD…CQGG), 414 to 458 (GHSV…VSRR), and 461 to 500 (GHQA…EGVI). The segment at 527–554 (PQRKLRKPISARNAKCPTTSSEPDDFQI) is disordered.

This sequence belongs to the WD repeat LEC14B family.

Involved in regulation of lifespan. Required for dopaminergic CEP neuron degeneration in response to Mn(2+). This is DDB1- and CUL4-associated factor 11 homolog (wdr-23) from Caenorhabditis briggsae.